Here is a 764-residue protein sequence, read N- to C-terminus: Bifunctional type I diterpene synthase tndC (764 aa).

The terpene cyclase stretch occupies residues 1–324; the sequence is MEYRYSTVVD…CPRYHPWSSY (324 aa). D92 and D96 together coordinate Mg(2+). The DDXXD 1 signature appears at 92 to 96; that stretch reads DDVTD. The NSE/DTE motif lies at 224–232; that stretch reads NDLYSWQKE. The tract at residues 325-761 is prenyltransferase; that stretch reads NERQLDWMKN…FQLRLILEML (437 aa). The interval 377 to 403 is disordered; it reads AVNGNGASHTSSIKGSTGGNGVTHSPV. Residues 381-391 are compositionally biased toward polar residues; that stretch reads NGASHTSSIKG. Isopentenyl diphosphate-binding residues include K484, R487, and H516. Positions 523 and 527 each coordinate Mg(2+). The DDXXD 2 signature appears at 523 to 527; it reads DDLED. R532 serves as a coordination point for dimethylallyl diphosphate. R533 serves as a coordination point for isopentenyl diphosphate. Dimethylallyl diphosphate is bound by residues K610, T611, Q646, N653, K663, and K673.

The protein in the N-terminal section; belongs to the terpene synthase family. It in the C-terminal section; belongs to the FPP/GGPP synthase family.

The catalysed reaction is isopentenyl diphosphate + (2E,6E)-farnesyl diphosphate = (2E,6E,10E)-geranylgeranyl diphosphate + diphosphate. It carries out the reaction (2E,6E,10E)-geranylgeranyl diphosphate = talarodiene + diphosphate. It participates in secondary metabolite biosynthesis; terpenoid biosynthesis. In terms of biological role, bifunctional type I diterpene synthase; part of the gene cluster that mediates the biosynthesis of talaronoid C, a fusicoccane diterpenoid with an unprecedented tricyclic 5/8/6 ring system. The first step in the pathway is performed by the fusicoccadiene synthase tndC that possesses both prenyl transferase and terpene cyclase activity, converting isopentenyl diphosphate and dimethylallyl diphosphate into geranylgeranyl diphosphate (GGDP) and further converting GGDP into talarodiene, a precursor for talaronoid C. The remaining enzymes from the cluster include the cytochrome P450 monooxygenase tndB, the aldehyde reductase tndE and the alcohol dehydrogenase tndF that are involved in the conversion of talarodiene into talaronoid C. The chain is Bifunctional type I diterpene synthase tndC from Aspergillus flavipes.